The chain runs to 480 residues: Coronin-2B (480 aa).

WD repeat units follow at residues 85–125 (GHQG…LKRN), 135–177 (GHSR…KMID), 179–217 (HRDVILCMSFNTDGSLLATTCKDKKLRVLEPRSGRVLQE), 220–263 (CKTH…MPVT), and 265–308 (EEID…PYLT). Residues 436–475 (NELLRMFFRQQEEIRRLKEQLSQRDLLVRQLELELKNLRN) adopt a coiled-coil conformation.

The protein belongs to the WD repeat coronin family.

It is found in the cytoplasm. Its subcellular location is the cytoskeleton. May play a role in the reorganization of neuronal actin structure. This is Coronin-2B (coro2b) from Xenopus tropicalis (Western clawed frog).